A 20-amino-acid polypeptide reads, in one-letter code: Thylakoid lumenal 20 kDa protein (20 aa).

Positions 1–20 are disordered; the sequence is RDVDVGSFLPKSPSDPSMVL.

It is found in the plastid. It localises to the chloroplast thylakoid lumen. This Spinacia oleracea (Spinach) protein is Thylakoid lumenal 20 kDa protein.